Here is a 347-residue protein sequence, read N- to C-terminus: Neutral protease 2 homolog MGG_10927 (347 aa).

The signal sequence occupies residues 1-19 (MKYSVGITALLATLAQGAA). The propeptide occupies 20 to 176 (VMSKRDIPLD…RSYLAKRTMV (157 aa)). Intrachain disulfides connect cysteine 180/cysteine 250 and cysteine 257/cysteine 275. Zn(2+) is bound at residue histidine 299. Glutamate 300 is an active-site residue. Histidine 303 is a binding site for Zn(2+).

This sequence belongs to the peptidase M35 family. The cofactor is Zn(2+).

The protein localises to the secreted. The catalysed reaction is Preferential cleavage of bonds with hydrophobic residues in P1'. Also 3-Asn-|-Gln-4 and 8-Gly-|-Ser-9 bonds in insulin B chain.. Its function is as follows. Secreted metalloproteinase that allows assimilation of proteinaceous substrates. Shows high activities on basic nuclear substrates such as histone and protamine. This Pyricularia oryzae (strain 70-15 / ATCC MYA-4617 / FGSC 8958) (Rice blast fungus) protein is Neutral protease 2 homolog MGG_10927.